The sequence spans 1154 residues: Caspase recruitment domain-containing protein 11 (1154 aa).

The CARD domain maps to 18 to 110 (EEDALWENVE…ELYKLVTGKE (93 aa)). Residues 111-128 (PTRRFSTIVVEEGHEGLT) form a linker region. The stretch at 130-449 (FLMNEVIKLQ…KDSNNLDQSL (320 aa)) forms a coiled coil. Residues serine 448 and serine 466 each carry the phosphoserine modification. The segment at 450 to 666 (PRNLPVTIIS…GHVRGPGPSV (217 aa)) is inhibitory domain (ID). The disordered stretch occupies residues 460–626 (QDFGDASPRT…HSSSSSHQSE (167 aa)). Positions 473–484 (EADDSSTSEESP) are enriched in acidic residues. Position 512 is a phosphoserine (serine 512). Over residues 518–529 (RTSDFQAKGHEE) the composition is skewed to basic and acidic residues. Positions 534-562 (ASPSSCGSLPITNSFTKMQPPRSRSSIMS) are enriched in polar residues. Serine 535 carries the post-translational modification Phosphoserine. Phosphoserine; by PKC/PRKCB and PKC/PRKCQ is present on serine 559. Residues 573–587 (IVRRYKEDAPHRSTV) show a composition bias toward basic and acidic residues. Residue serine 593 is modified to Phosphoserine. Residues 614–625 (SSIHSSSSSHQS) are compositionally biased toward low complexity. 2 positions are modified to phosphoserine; by PKC/PRKCB and PKC/PRKCQ: serine 644 and serine 652. The region spanning 667–755 (QHTTLNGDSL…PVTLHYKVNH (89 aa)) is the PDZ domain. Phosphoserine is present on residues serine 886 and serine 925. The region spanning 973 to 1140 (RRRPVLFTPT…LLRVVKDKIG (168 aa)) is the Guanylate kinase-like domain.

In terms of assembly, homodimer; disulfide-linked. Homomultimer; polymerizes following activation, forming a nucleating helical template that seeds BCL10-filament formation via a CARD-CARD interaction. Interacts (via CARD domain) with BCL10 (via CARD domain); interaction takes place following CARD11 activation and polymerization, leading to the formation of a filamentous CBM complex assembly. Component of a CBM complex (CARD11-BCL10-MALT1) complex involved in NF-kappa-B activation. Found in a membrane raft complex, at least composed of BCL10, CARD11, DPP4 and IKBKB. Interacts (via PDZ domain) with DPP4 (via cytoplasmic tail). In terms of processing, phosphorylation at Ser-559, Ser-644 and Ser-652 by PRKCB and PRKCQ leads to a shift from an inactive to an active form that activates the NF-kappa-B signaling. In terms of tissue distribution, detected in adult peripheral blood leukocytes, thymus, spleen and liver. Also found in promyelocytic leukemia HL-60 cells, chronic myelogenous leukemia K-562 cells, Burkitt's lymphoma Raji cells and colorectal adenocarcinoma SW480 cells. Not detected in HeLaS3, MOLT-4, A-549 and G431 cells.

It localises to the cytoplasm. Its subcellular location is the membrane raft. Maintained in an autoinhibited state via homodimerization in which the CARD domain forms an extensive interaction with the adjacent linker and coiled-coil regions. Activation downstream of T-cell receptor (TCR) by phosphorylation by PRKCB and PRKCQ triggers CARD11 homooligomerization and BCL10 recruitment, followed by activation of NF-kappa-B. Adapter protein that plays a key role in adaptive immune response by transducing the activation of NF-kappa-B downstream of T-cell receptor (TCR) and B-cell receptor (BCR) engagement. Transduces signals downstream TCR or BCR activation via the formation of a multiprotein complex together with BCL10 and MALT1 that induces NF-kappa-B and MAP kinase p38 (MAPK11, MAPK12, MAPK13 and/or MAPK14) pathways. Upon activation in response to TCR or BCR triggering, CARD11 homooligomerizes to form a nucleating helical template that recruits BCL10 via CARD-CARD interaction, thereby promoting polymerization of BCL10 and subsequent recruitment of MALT1: this leads to I-kappa-B kinase (IKK) phosphorylation and degradation, and release of NF-kappa-B proteins for nuclear translocation. Its binding to DPP4 induces T-cell proliferation and NF-kappa-B activation in a T-cell receptor/CD3-dependent manner. Promotes linear ubiquitination of BCL10 by promoting the targeting of BCL10 to RNF31/HOIP. Stimulates the phosphorylation of BCL10. Also activates the TORC1 signaling pathway. In Homo sapiens (Human), this protein is Caspase recruitment domain-containing protein 11.